The following is a 220-amino-acid chain: Protein GrpE (220 aa).

A disordered region spans residues 1-22 (MSDEKNKFTDASFENCDLKNPS).

The protein belongs to the GrpE family. As to quaternary structure, homodimer.

The protein resides in the cytoplasm. Its function is as follows. Participates actively in the response to hyperosmotic and heat shock by preventing the aggregation of stress-denatured proteins, in association with DnaK and GrpE. It is the nucleotide exchange factor for DnaK and may function as a thermosensor. Unfolded proteins bind initially to DnaJ; upon interaction with the DnaJ-bound protein, DnaK hydrolyzes its bound ATP, resulting in the formation of a stable complex. GrpE releases ADP from DnaK; ATP binding to DnaK triggers the release of the substrate protein, thus completing the reaction cycle. Several rounds of ATP-dependent interactions between DnaJ, DnaK and GrpE are required for fully efficient folding. The sequence is that of Protein GrpE from Bartonella henselae (strain ATCC 49882 / DSM 28221 / CCUG 30454 / Houston 1) (Rochalimaea henselae).